Reading from the N-terminus, the 196-residue chain is CASP-like protein 2U1 (196 aa).

Residues M1 to N11 are Cytoplasmic-facing. Residues V12–L32 traverse the membrane as a helical segment. At V33–T58 the chain is on the extracellular side. Residues G59–L79 form a helical membrane-spanning segment. Over T80–G95 the chain is Cytoplasmic. The helical transmembrane segment at A96–A116 threads the bilayer. At A117–E148 the chain is on the extracellular side. Residues V149–A169 traverse the membrane as a helical segment. At K170–L196 the chain is on the cytoplasmic side.

It belongs to the Casparian strip membrane proteins (CASP) family. In terms of assembly, homodimer and heterodimers.

The protein localises to the cell membrane. This Pteridium aquilinum subsp. aquilinum (Bracken fern) protein is CASP-like protein 2U1.